The following is a 229-amino-acid chain: Large ribosomal subunit protein uL1 (229 aa).

Belongs to the universal ribosomal protein uL1 family. As to quaternary structure, part of the 50S ribosomal subunit.

Its function is as follows. Binds directly to 23S rRNA. The L1 stalk is quite mobile in the ribosome, and is involved in E site tRNA release. In terms of biological role, protein L1 is also a translational repressor protein, it controls the translation of the L11 operon by binding to its mRNA. The sequence is that of Large ribosomal subunit protein uL1 from Haemophilus influenzae (strain 86-028NP).